The sequence spans 384 residues: Cyanate transport protein CynX (384 aa).

Helical transmembrane passes span 3–23, 34–54, 68–88, 89–109, 122–142, 153–173, 204–224, 235–255, 263–283, 287–307, 322–342, and 354–374; these read LVLVLIGLNMRPLLTSVGPLL, FSVAALLTALPVVTMGGLALA, VAISLLLIAVGALMRELYPQS, ALLLSSALLGGVGIGIIQAVM, PLVMGLWSAALMGGGGLGAAI, WYQTLAWWALPAVVALFAWWW, YFGLINGGYASLIAWLPAFYI, SLLALMTLGQAAGALLMPAMA, LLMLALVLQLVGFCGFIWLPM, VLWAMVCGLGLGGAFPLCLLL, VAFMQGIGFIIAGLAPWFSGV, and WAFHALCVVGLMIITLRFAPV.

This sequence belongs to the major facilitator superfamily. Cyanate porter (TC 2.A.1.17) family.

It is found in the cell inner membrane. In terms of biological role, this protein is part of an active transport system that transports exogenous cyanate into E.coli cells. The polypeptide is Cyanate transport protein CynX (cynX) (Escherichia coli (strain K12)).